We begin with the raw amino-acid sequence, 647 residues long: TNFAIP3-interacting protein 1 (647 aa).

A coiled-coil region spans residues 39–72 (MQGIKMLGELLEESQMEASRLRQKAEELVKDSEL). The segment covering 61–71 (QKAEELVKDSE) has biased composition (basic and acidic residues). The tract at residues 61–168 (QKAEELVKDS…DLGPPPPEDS (108 aa)) is disordered. Serine 77 bears the Phosphoserine mark. The interval 95 to 425 (TKVQVHPATS…SPLTRQREYQ (331 aa)) is interaction with Nef. The segment covering 102–115 (ATSTAATTTATATT) has biased composition (low complexity). The segment covering 143–155 (EEQNSPETGSHPT) has biased composition (polar residues). Residues 209-270 (SKVHKNEQRT…KKLLMNSSCK (62 aa)) are a coiled coil. A phosphoserine mark is found at serine 297, serine 416, and serine 455. Residues 311–551 (AAEKKVKLLE…KASGERYHME (241 aa)) adopt a coiled-coil conformation. Positions 444-601 (ASPSSPPAAF…MEHPPPHPNS (158 aa)) are required for inhibitory activity of TNF-induced NF-kappa-B activation. The ubiquitin-binding domain (UBD) stretch occupies residues 465–523 (KQELVTQNELLKQQVKIFEEDFQRERSDRERMNEEKEELKKQVEKLQAQVTLTNAQLKT). Residues 537–543 (QKRKAKA) carry the Nuclear localization signal motif. A Phosphotyrosine modification is found at tyrosine 565. At arginine 584 the chain carries Asymmetric dimethylarginine. Arginine 612 bears the Asymmetric dimethylarginine; alternate mark. The residue at position 612 (arginine 612) is an Omega-N-methylarginine; alternate. The tract at residues 613–647 (PPCAGIRNQSSQVMDPPPDRPAEPESADNDCDGPQ) is disordered. Positions 637–647 (ESADNDCDGPQ) are enriched in acidic residues. Serine 638 bears the Phosphoserine mark.

In terms of assembly, interacts with TNFAIP3 and IKBKG (polyubiquitinated); facilitates TNFAIP3-mediated de-ubiquitination of NEMO/IKBKG. Interacts with polyubiquitin. Interacts with MAPK1, SELPLG and PIK3CD. Interacts with IRAK1 (polyubiquitinated). Interacts with MYD88; the interaction is indicative for participation in an activated TLR-signaling complex. Interacts with TAX1BP1. In terms of processing, phosphorylation at Tyr-565 by SRC-family kinases recruits phosphoinositide-3-kinase (PI3K) PIK3CD:p85 heterodimer which results in integrin activation and leukocyte adhesion to activated endothelium during inflammation. Ubiquitous. Abundant in heart and skeletal muscle and expressed at lower levels in thymus, liver, kidney, brain and intestinal tract.

It is found in the cytoplasm. The protein localises to the nucleus. Its function is as follows. Inhibits NF-kappa-B activation and TNF-induced NF-kappa-B-dependent gene expression by regulating TAX1BP1 and A20/TNFAIP3-mediated deubiquitination of IKBKG; proposed to link A20/TNFAIP3 to ubiquitinated IKBKG. Involved in regulation of EGF-induced ERK1/ERK2 signaling pathway; blocks MAPK3/MAPK1 nuclear translocation and MAPK1-dependent transcription. Increases cell surface CD4(T4) antigen expression. Involved in the anti-inflammatory response of macrophages and positively regulates TLR-induced activation of CEBPB. Involved in the prevention of autoimmunity; this function implicates binding to polyubiquitin. Involved in leukocyte integrin activation during inflammation; this function is mediated by association with SELPLG and dependent on phosphorylation by SRC-family kinases. The protein is TNFAIP3-interacting protein 1 (Tnip1) of Mus musculus (Mouse).